We begin with the raw amino-acid sequence, 977 residues long: MAAPPKAWKAEYAKSGRSSCKSCRSPIGKDQLRLGKMVQATQFDGLMPMWNHASCILSKKNQIKSVDDVEGIDTLRWDDQEKIRNYVGSAPATASSAAAISDKCTIEVAKSARTSCRRCGEKIKKGTVRVSSKLEGQGWYHASCFLEMSPAATVENFSGWEILSHEDKRAVLDLVKKDAPSSGQTSSKGSKRKNNQNDIHDCKAPKIIRSISEGTAEDKGKAVVSHDSNANSSDLQEKLKEQSDTLWKLKDELKKHVSTAELRNMLEANGQDTSGPERHLLDRCADGMLFGALGTCPVCSSFLYYHGGQYHCSGYVSEWSKCTYSTTEPVRSKKKWKIPDEMDNGYLTKWFKSQKAKKPERVLPPMSPEKSLCQSTQQNRSFLSEGLDKLRVSIVGQSKDVVDGWKQKLKDAGANFNATVTKDSSCLVLCSELESENAEVKKARRLKIPILREGYLGECIRKNRVLPFDLYKVEAALESSKGGTMTVKVKGRSAVHESSGLQDTGHILEDGKSIYNTTLNMSDLTRGVNSYYILQVIEEDNGSDCYVFRKWGRVGNEKIGGTKLEEMSKIHAIQEFRRLFLEKTGNPWEAWEQKTNFQKQPGKFYPLDIDYGVRQGPKRKDIDKMKSSLPPQLLELMNMLFNIETYRAAMLEFKINMSEMPLGKLSKENIQKGFEALTEIQNLLGNTNNQELAVRESLIVAASNRFFTLIPSIHPHIIQDEDDLMVKVKMLEALQDIEIASKLVGFDSDNDESLDDKYKKLRCAITPLPHDCEDYKLVEKYLLNTHAPTHKEWSLELEEVFSLDRDGEFSKYSRYKNNLHNKMLLWHGSRLTNYVGILSQGLRIAPPEAPVTGYMFGKGLYFADLVSKSAQYCYVDRKNPVGLMLLSEVALGDMYELKKATSMDKPPRGKHSTKGLGKTVPLESEFAKWRDDVVVPCGKPVPASIKTSELMYNEYIVYNTSQVKMQYLLKVRFHHKR.

2 consecutive PARP-type zinc fingers follow at residues 8–91 (WKAE…GSAP) and 104–179 (CTIE…KKDA). Positions 20, 23, 52, 55, 116, 119, 141, and 144 each coordinate Zn(2+). 2 disordered regions span residues 177–199 (KDAP…QNDI) and 218–237 (DKGK…DLQE). Residues 227–365 (DSNANSSDLQ…AKKPERVLPP (139 aa)) form the PADR1 zinc-binding domain. Positions 254-288 (KKHVSTAELRNMLEANGQDTSGPERHLLDRCADGM) constitute an SAP domain. The zinc ribbon stretch occupies residues 291-335 (GALGTCPVCSSFLYYHGGQYHCSGYVSEWSKCTYSTTEPVRSKKK). 4 residues coordinate Zn(2+): Cys296, Cys299, Cys312, and Cys322. In terms of domain architecture, BRCT spans 381 to 473 (SFLSEGLDKL…RVLPFDLYKV (93 aa)). In terms of domain architecture, WGR spans 504 to 604 (TGHILEDGKS…TNFQKQPGKF (101 aa)). A PARP alpha-helical domain is found at 626–745 (KSSLPPQLLE…DIEIASKLVG (120 aa)). Residues 752 to 977 (ESLDDKYKKL…LLKVRFHHKR (226 aa)) enclose the PARP catalytic domain.

The protein belongs to the ARTD/PARP family.

Its subcellular location is the nucleus. It carries out the reaction NAD(+) + (ADP-D-ribosyl)n-acceptor = nicotinamide + (ADP-D-ribosyl)n+1-acceptor + H(+).. The catalysed reaction is L-aspartyl-[protein] + NAD(+) = 4-O-(ADP-D-ribosyl)-L-aspartyl-[protein] + nicotinamide. It catalyses the reaction L-glutamyl-[protein] + NAD(+) = 5-O-(ADP-D-ribosyl)-L-glutamyl-[protein] + nicotinamide. In terms of biological role, involved in the base excision repair (BER) pathway, by catalyzing the poly(ADP-ribosyl)ation of a limited number of acceptor proteins involved in chromatin architecture and in DNA metabolism. This modification follows DNA damages and appears as an obligatory step in a detection/signaling pathway leading to the reparation of DNA strand breaks. In Oryza sativa subsp. japonica (Rice), this protein is Poly [ADP-ribose] polymerase 1 (PARP1).